The primary structure comprises 1287 residues: FYVE zinc finger domain protein UPA1 (1287 aa).

The interval 1–298 (MTIPDPANII…SSTSLSAPAE (298 aa)) is disordered. The span at 86 to 99 (DSSSFGSKPSSSAS) shows a compositional bias: low complexity. The segment covering 115–136 (WATSSTTSHPSKASQSTLSPNA) has biased composition (polar residues). A PAM2 motif is present at residues 128-144 (SQSTLSPNASVFKPSRS). 2 stretches are compositionally biased toward basic and acidic residues: residues 177 to 187 (RPDHAPLDHEQ) and 201 to 211 (KVEEQRGDHSI). The segment covering 212–235 (PHQNGLVSAQAQTASDAVSTSKYT) has biased composition (polar residues). Positions 239–253 (ADQEEDQDDFVYPGA) match the PAM2L 1 motif. The span at 255–294 (SPSSGQAAVQDEQQAVTDSQTTKSLTKQESDPEASSTSLS) shows a compositional bias: polar residues. 4 ANK repeats span residues 366-395 (NGLV…AIVE), 400-429 (EGET…DANA), 433-463 (DGWT…QIDV), and 468-497 (GAWT…ADPF). 4 disordered regions span residues 582 to 630 (NGGK…VGLP), 643 to 697 (RVGP…ASAQ), 934 to 960 (REAA…YPNS), and 977 to 1005 (TSGT…APSE). Positions 674–695 (STPTPESVLQARRGTSSVNGAS) are enriched in polar residues. The segment covering 938–955 (GLDEDEDEDAADDDDDEF) has biased composition (acidic residues). A PAM2L 2 motif is present at residues 941–960 (EDEDEDAADDDDDEFIYPNS). The segment covering 981–995 (LSRPSLSQRQSSAAS) has biased composition (low complexity). Residues 1055–1129 (DEEAKDCIGC…VCNGCHAELQ (75 aa)) form an FYVE-type zinc finger. 8 residues coordinate Zn(2+): C1061, C1064, C1077, C1080, C1085, C1088, C1121, and C1124. The RING-type; atypical zinc-finger motif lies at 1243 to 1283 (CSICMEDFVANSTIARLPCLCYFHRGCIDSWFKRGRECPVH).

It belongs to the UPA1 PAM2 domain-binding protein family. Part of large ribonucleoprotein complexes (mRNPs) containing RNA-binding proteins RRM4 and PAB1, endosome-binding protein UPA1, core scaffold protein UPA2 and associated factor GRP1. Interacts (via PAM2 motif) with PAB1 (via PABC domain). Interacts (via PAM2L motifs) with RRM4.

It is found in the cytoplasm. It localises to the cytoskeleton. The protein localises to the endosome. FYVE zinc finger domain protein that functions in endosomal targeting and transport of mRNAs, as well as associated ribosomes. The endosomal mRNA transport regulates polarity of the infectious hyphae by transporting a broad spectrum of cargo mRNAs from the nucleus to cell poles. Involved in chitinase CTS1 secretion. Dispensable for general endosomal functions but crucial for endosomal recruitment of RRM4. This Mycosarcoma maydis (Corn smut fungus) protein is FYVE zinc finger domain protein UPA1.